The following is a 105-amino-acid chain: Antitoxin HigA-1 (105 aa).

Positions 15 to 69 constitute an HTH cro/C1-type domain; sequence LKVEFLEPMGITSKALAEAMGVHRNTVSNLINGGVLTAPVAIKLAAALGNTPEFW. The segment at residues 27–46 is a DNA-binding region (H-T-H motif); sequence SKALAEAMGVHRNTVSNLIN.

Functionally, antitoxin component of a type II toxin-antitoxin (TA) system that counteracts the effect of the HigB-1 toxin. Binds to its own promoter and regulates transcription of the higB-1/higA-1 operon. The protein is Antitoxin HigA-1 (higA-1) of Vibrio cholerae serotype O1 (strain ATCC 39315 / El Tor Inaba N16961).